The sequence spans 410 residues: L-sorbose 1-phosphate reductase (410 aa).

3 residues coordinate Zn(2+): C40, H69, and E70. Residues R221 and 309–310 contribute to the NAD(+) site; that span reads GT.

The protein belongs to the zinc-containing alcohol dehydrogenase family. Requires Zn(2+) as cofactor.

In terms of biological role, reduces L-sorbose 1-phosphate to D-glucitol 6-phosphate. The chain is L-sorbose 1-phosphate reductase (sorE) from Klebsiella pneumoniae.